Here is a 625-residue protein sequence, read N- to C-terminus: Adenine deaminase 2 (625 aa).

It belongs to the metallo-dependent hydrolases superfamily. Adenine deaminase family. Requires Mn(2+) as cofactor.

The enzyme catalyses adenine + H2O + H(+) = hypoxanthine + NH4(+). This is Adenine deaminase 2 from Bradyrhizobium diazoefficiens (strain JCM 10833 / BCRC 13528 / IAM 13628 / NBRC 14792 / USDA 110).